Reading from the N-terminus, the 87-residue chain is Cell division topological specificity factor (87 aa).

This sequence belongs to the MinE family.

Its function is as follows. Prevents the cell division inhibition by proteins MinC and MinD at internal division sites while permitting inhibition at polar sites. This ensures cell division at the proper site by restricting the formation of a division septum at the midpoint of the long axis of the cell. In Neisseria meningitidis serogroup C (strain 053442), this protein is Cell division topological specificity factor.